The sequence spans 153 residues: Phosphatase NudJ (153 aa).

Residues Lys3–Gln131 enclose the Nudix hydrolase domain. Positions Gly36–Gly57 match the Nudix box motif.

Belongs to the Nudix hydrolase family. NudJ subfamily. As to quaternary structure, monomer. The cofactor is Mg(2+).

This chain is Phosphatase NudJ (nudJ), found in Shigella boydii serotype 4 (strain Sb227).